The sequence spans 162 residues: Caveolin-2 (162 aa).

Topologically, residues 1–86 are cytoplasmic; sequence MGLETEKADV…FEISKYVMYK (86 aa). Tyr-19 carries the post-translational modification Phosphotyrosine; by SRC. Ser-20 and Ser-23 each carry phosphoserine. Position 27 is a phosphotyrosine; by SRC (Tyr-27). Ser-36 is modified (phosphoserine). Positions 87 to 107 form an intramembrane region, helical; it reads FLTVFLAIPLAFIAGILFATL. At 108-162 the chain is on the cytoplasmic side; it reads SCLHIWILMPFVKTCLMVLPSVQTIWKSVTDVIIAPLCTSVGRCFSSVSLQLSQD.

The protein belongs to the caveolin family. In terms of assembly, monomer or homodimer. Interacts with CAV1; the interaction forms a stable heterooligomeric complex that is required for targeting to lipid rafts and for caveolae formation. Tyrosine phosphorylated forms do not form heterooligomers with the Tyr-19-phosphorylated form existing as a monomer or dimer, and the Tyr-27-form as a monomer only. Interacts (tyrosine phosphorylated form) with the SH2 domain-containing proteins, RASA1, NCK1 and SRC. Interacts (tyrosine phosphorylated form) with INSR, the interaction (Tyr-27-phosphorylated form) is increased on insulin stimulation. Interacts (Tyr-19 phosphorylated form) with MAPK1 (phosphorylated form); the interaction, promoted by insulin, leads to nuclear location and MAPK1 activation. Interacts with STAT3; the interaction is increased on insulin-induced tyrosine phosphorylation leading to STAT activation. In terms of processing, phosphorylated on serine and tyrosine residues. CAV1 promotes phosphorylation on Ser-23 which then targets the complex to the plasma membrane, lipid rafts and caveolae. Phosphorylation on Ser-36 appears to modulate mitosis in endothelial cells. Phosphorylation on both Tyr-19 and Tyr-27 is required for insulin-induced 'Ser-727' phosphorylation of STAT3 and its activation. Phosphorylation on Tyr-19 is required for insulin-induced phosphorylation of MAPK1 and DNA binding of STAT3. Tyrosine phosphorylation is induced by both EGF and insulin (By. similarity).

Its subcellular location is the nucleus. It localises to the cytoplasm. It is found in the golgi apparatus membrane. The protein localises to the cell membrane. The protein resides in the membrane. Its subcellular location is the caveola. Functionally, may act as a scaffolding protein within caveolar membranes. Interacts directly with G-protein alpha subunits and can functionally regulate their activity. Acts as an accessory protein in conjunction with CAV1 in targeting to lipid rafts and driving caveolae formation. The Ser-36 phosphorylated form has a role in modulating mitosis in endothelial cells. Positive regulator of cellular mitogenesis of the MAPK signaling pathway. Required for the insulin-stimulated nuclear translocation and activation of MAPK1 and STAT3, and the subsequent regulation of cell cycle progression. This chain is Caveolin-2 (CAV2), found in Pan troglodytes (Chimpanzee).